The primary structure comprises 304 residues: Quinolinate synthase 1 (304 aa).

The iminosuccinate site is built by His-24 and Ser-41. Residue Cys-86 participates in [4Fe-4S] cluster binding. Residues 112-114 and Ser-129 contribute to the iminosuccinate site; that span reads YVN. [4Fe-4S] cluster is bound at residue Cys-171. Iminosuccinate is bound by residues 197 to 199 and Thr-214; that span reads HPE. Cys-259 is a binding site for [4Fe-4S] cluster.

It belongs to the quinolinate synthase family. Type 2 subfamily. [4Fe-4S] cluster is required as a cofactor.

The protein localises to the cytoplasm. The catalysed reaction is iminosuccinate + dihydroxyacetone phosphate = quinolinate + phosphate + 2 H2O + H(+). Its pathway is cofactor biosynthesis; NAD(+) biosynthesis; quinolinate from iminoaspartate: step 1/1. Functionally, catalyzes the condensation of iminoaspartate with dihydroxyacetone phosphate to form quinolinate. In Methanosarcina acetivorans (strain ATCC 35395 / DSM 2834 / JCM 12185 / C2A), this protein is Quinolinate synthase 1.